We begin with the raw amino-acid sequence, 403 residues long: Phosphopentomutase (403 aa).

6 residues coordinate Mn(2+): Asp13, Asp298, His303, Asp339, His340, and His351.

It belongs to the phosphopentomutase family. Mn(2+) is required as a cofactor.

The protein resides in the cytoplasm. The enzyme catalyses 2-deoxy-alpha-D-ribose 1-phosphate = 2-deoxy-D-ribose 5-phosphate. It carries out the reaction alpha-D-ribose 1-phosphate = D-ribose 5-phosphate. The protein operates within carbohydrate degradation; 2-deoxy-D-ribose 1-phosphate degradation; D-glyceraldehyde 3-phosphate and acetaldehyde from 2-deoxy-alpha-D-ribose 1-phosphate: step 1/2. Isomerase that catalyzes the conversion of deoxy-ribose 1-phosphate (dRib-1-P) and ribose 1-phosphate (Rib-1-P) to deoxy-ribose 5-phosphate (dRib-5-P) and ribose 5-phosphate (Rib-5-P), respectively. The protein is Phosphopentomutase of Streptococcus pneumoniae serotype 2 (strain D39 / NCTC 7466).